A 305-amino-acid chain; its full sequence is Sulfate adenylyltransferase subunit 2 (305 aa).

This sequence belongs to the PAPS reductase family. CysD subfamily. Heterodimer composed of CysD, the smaller subunit, and CysN.

It carries out the reaction sulfate + ATP + H(+) = adenosine 5'-phosphosulfate + diphosphate. Its pathway is sulfur metabolism; hydrogen sulfide biosynthesis; sulfite from sulfate: step 1/3. Functionally, with CysN forms the ATP sulfurylase (ATPS) that catalyzes the adenylation of sulfate producing adenosine 5'-phosphosulfate (APS) and diphosphate, the first enzymatic step in sulfur assimilation pathway. APS synthesis involves the formation of a high-energy phosphoric-sulfuric acid anhydride bond driven by GTP hydrolysis by CysN coupled to ATP hydrolysis by CysD. In Pseudomonas entomophila (strain L48), this protein is Sulfate adenylyltransferase subunit 2.